A 401-amino-acid polypeptide reads, in one-letter code: Argininosuccinate synthase (401 aa).

Residues 10–18 (AYSGGLDTS) and Ala-37 each bind ATP. Tyr-89 contributes to the L-citrulline binding site. Gly-119 contributes to the ATP binding site. The L-aspartate site is built by Thr-121, Asn-125, and Asp-126. An L-citrulline-binding site is contributed by Asn-125. Residues Arg-129, Ser-178, Ser-187, Glu-263, and Tyr-275 each coordinate L-citrulline.

Belongs to the argininosuccinate synthase family. Type 1 subfamily. Homotetramer.

Its subcellular location is the cytoplasm. It catalyses the reaction L-citrulline + L-aspartate + ATP = 2-(N(omega)-L-arginino)succinate + AMP + diphosphate + H(+). The protein operates within amino-acid biosynthesis; L-arginine biosynthesis; L-arginine from L-ornithine and carbamoyl phosphate: step 2/3. In Buchnera aphidicola subsp. Schizaphis graminum (strain Sg), this protein is Argininosuccinate synthase.